We begin with the raw amino-acid sequence, 292 residues long: Ribosomal RNA small subunit methyltransferase A (292 aa).

Residues asparagine 29, leucine 31, glycine 56, glutamate 77, aspartate 102, and asparagine 127 each contribute to the S-adenosyl-L-methionine site.

This sequence belongs to the class I-like SAM-binding methyltransferase superfamily. rRNA adenine N(6)-methyltransferase family. RsmA subfamily.

It is found in the cytoplasm. It catalyses the reaction adenosine(1518)/adenosine(1519) in 16S rRNA + 4 S-adenosyl-L-methionine = N(6)-dimethyladenosine(1518)/N(6)-dimethyladenosine(1519) in 16S rRNA + 4 S-adenosyl-L-homocysteine + 4 H(+). In terms of biological role, specifically dimethylates two adjacent adenosines (A1518 and A1519) in the loop of a conserved hairpin near the 3'-end of 16S rRNA in the 30S particle. May play a critical role in biogenesis of 30S subunits. The sequence is that of Ribosomal RNA small subunit methyltransferase A from Bacillus licheniformis (strain ATCC 14580 / DSM 13 / JCM 2505 / CCUG 7422 / NBRC 12200 / NCIMB 9375 / NCTC 10341 / NRRL NRS-1264 / Gibson 46).